A 415-amino-acid polypeptide reads, in one-letter code: Fructose-like permease IIC component (415 aa).

Residues 1–46 (MAIKKRSATVVPGASGAAAAVKNLQASKSSFWGELPQHVMSGISRM) lie on the Cytoplasmic side of the membrane. Residues 35-415 (LPQHVMSGIS…RKGKLLIDSL (381 aa)) enclose the PTS EIIC type-2 domain. A helical transmembrane segment spans residues 47–67 (VPTLIMGGVILAFSQLIAYSW). The Periplasmic segment spans residues 68 to 101 (LKIPAEIGIMDALNSGKFSGFDLSLLKFAWLSQS). Residues 102 to 122 (FGGVLFGFAIPMFAAFVANSI) form a helical membrane-spanning segment. Over 123-126 (GGKL) the chain is Cytoplasmic. Residues 127-147 (AFPAGFIGGLMSTQPTQLLNF) traverse the membrane as a helical segment. At 148–157 (DPSTMQWATS) the chain is on the periplasmic side. Residues 158 to 178 (SPVPSTFIGALIISIVAGYLV) form a helical membrane-spanning segment. At 179-197 (KWMNQKIQLPDFLLAFKTT) the chain is on the cytoplasmic side. Residues 198-218 (FLLPILSAIFVMLAMYYVITP) form a helical membrane-spanning segment. The Periplasmic segment spans residues 219-237 (FGGWINGGIRTVLTAAGEK). A helical membrane pass occupies residues 238–258 (GALMYAMGIAAATAIDLGGPI). Over 259–276 (NKAAGFVAFSFTTDHVLP) the chain is Cytoplasmic. A helical transmembrane segment spans residues 277–297 (VTARSIAIVIPPIGLGLATII). The Periplasmic segment spans residues 298–318 (DRRLTGKRLFNAQLYPQGKTA). The chain crosses the membrane as a helical span at residues 319–339 (MFLAFMGISEGAIPFALESPI). Over 340–341 (TA) the chain is Cytoplasmic. Residues 342-362 (IPSYMVGAIVGSTAAVWLGAV) traverse the membrane as a helical segment. The Periplasmic segment spans residues 363 to 378 (QWFPESAIWAWPLVTN). The chain crosses the membrane as a helical span at residues 379–399 (LGVYMAGIALGAIITALMVVF). The Cytoplasmic segment spans residues 400-415 (LRLMMFRKGKLLIDSL).

It is found in the cell inner membrane. In terms of biological role, the phosphoenolpyruvate-dependent sugar phosphotransferase system (PTS), a major carbohydrate active -transport system, catalyzes the phosphorylation of incoming sugar substrates concomitant with their translocation across the cell membrane. The sequence is that of Fructose-like permease IIC component (fryC) from Shigella flexneri.